A 103-amino-acid polypeptide reads, in one-letter code: Eukaryotic translation initiation factor 4E-1A-binding protein homolog (103 aa).

The tract at residues 49–103 is disordered; sequence NSPLSKTPPPQLAHITNTELNKKVEKSTTTPTTTTPPTTTAKPKPTNDDDIFPME. Residues 76 to 92 are compositionally biased toward low complexity; that stretch reads TTTPTTTTPPTTTAKPK.

It belongs to the eIF4E-binding protein family.

Functionally, regulates assembly of the eIF4F complex. The chain is Eukaryotic translation initiation factor 4E-1A-binding protein homolog (febA) from Dictyostelium discoideum (Social amoeba).